A 568-amino-acid chain; its full sequence is Urease subunit alpha (568 aa).

Positions 131–568 constitute a Urease domain; sequence GGMDAHIHFI…LPLAQRYFLY (438 aa). Residues His-136, His-138, and Lys-219 each coordinate Ni(2+). The residue at position 219 (Lys-219) is an N6-carboxylysine. His-221 serves as a coordination point for substrate. Positions 248 and 274 each coordinate Ni(2+). His-322 acts as the Proton donor in catalysis. Ni(2+) is bound at residue Asp-362.

This sequence belongs to the metallo-dependent hydrolases superfamily. Urease alpha subunit family. Heterotrimer of UreA (gamma), UreB (beta) and UreC (alpha) subunits. Three heterotrimers associate to form the active enzyme. It depends on Ni cation as a cofactor. In terms of processing, carboxylation allows a single lysine to coordinate two nickel ions.

It localises to the cytoplasm. The enzyme catalyses urea + 2 H2O + H(+) = hydrogencarbonate + 2 NH4(+). The protein operates within nitrogen metabolism; urea degradation; CO(2) and NH(3) from urea (urease route): step 1/1. This chain is Urease subunit alpha, found in Cereibacter sphaeroides (strain ATCC 17023 / DSM 158 / JCM 6121 / CCUG 31486 / LMG 2827 / NBRC 12203 / NCIMB 8253 / ATH 2.4.1.) (Rhodobacter sphaeroides).